Reading from the N-terminus, the 200-residue chain is Ubiquinol-cytochrome-c reductase complex assembly factor 1 (200 aa).

This sequence belongs to the CBP3 family.

The protein resides in the mitochondrion inner membrane. Required for the assembly of the ubiquinol-cytochrome c reductase complex (mitochondrial respiratory chain complex III or cytochrome b-c1 complex). May be involved in cytochrome b translation and/or stability. In Xenopus laevis (African clawed frog), this protein is Ubiquinol-cytochrome-c reductase complex assembly factor 1 (uqcc1).